The chain runs to 349 residues: Protein RecA (349 aa).

64–71 (GPESSGKT) lines the ATP pocket.

Belongs to the RecA family.

It localises to the cytoplasm. Functionally, can catalyze the hydrolysis of ATP in the presence of single-stranded DNA, the ATP-dependent uptake of single-stranded DNA by duplex DNA, and the ATP-dependent hybridization of homologous single-stranded DNAs. It interacts with LexA causing its activation and leading to its autocatalytic cleavage. This is Protein RecA from Rhodopseudomonas palustris (strain ATCC BAA-98 / CGA009).